The primary structure comprises 333 residues: Ketol-acid reductoisomerase (NADP(+)) (333 aa).

The KARI N-terminal Rossmann domain maps to 1–171 (MSNHTQPKIA…GGARANIIKT (171 aa)). Residues 14 to 17 (YGSQ), Arg37, Thr42, and 72 to 75 (DMVQ) contribute to the NADP(+) site. Residue His97 is part of the active site. Position 123 (Gly123) interacts with NADP(+). Residues 172–317 (TFKEETETDL…KKLRAKMVWL (146 aa)) form the KARI C-terminal knotted domain. Mg(2+) is bound by residues Asp180, Glu184, Glu216, and Glu220. Residue Ser241 coordinates substrate.

This sequence belongs to the ketol-acid reductoisomerase family. Mg(2+) is required as a cofactor.

The catalysed reaction is (2R)-2,3-dihydroxy-3-methylbutanoate + NADP(+) = (2S)-2-acetolactate + NADPH + H(+). It catalyses the reaction (2R,3R)-2,3-dihydroxy-3-methylpentanoate + NADP(+) = (S)-2-ethyl-2-hydroxy-3-oxobutanoate + NADPH + H(+). The protein operates within amino-acid biosynthesis; L-isoleucine biosynthesis; L-isoleucine from 2-oxobutanoate: step 2/4. Its pathway is amino-acid biosynthesis; L-valine biosynthesis; L-valine from pyruvate: step 2/4. In terms of biological role, involved in the biosynthesis of branched-chain amino acids (BCAA). Catalyzes an alkyl-migration followed by a ketol-acid reduction of (S)-2-acetolactate (S2AL) to yield (R)-2,3-dihydroxy-isovalerate. In the isomerase reaction, S2AL is rearranged via a Mg-dependent methyl migration to produce 3-hydroxy-3-methyl-2-ketobutyrate (HMKB). In the reductase reaction, this 2-ketoacid undergoes a metal-dependent reduction by NADPH to yield (R)-2,3-dihydroxy-isovalerate. This chain is Ketol-acid reductoisomerase (NADP(+)), found in Xanthomonas axonopodis pv. citri (strain 306).